The primary structure comprises 556 residues: Potassium-transporting ATPase potassium-binding subunit (556 aa).

10 consecutive transmembrane segments (helical) span residues 6 to 26 (AGLI…VPLG), 65 to 85 (GVLA…LVQG), 133 to 153 (GLAV…VALV), 176 to 196 (LRIL…GGAI), 249 to 269 (PTAW…FSLP), 283 to 303 (YAIA…MLWF), 378 to 398 (GLYG…LMVG), 419 to 439 (YFLV…ALPG), 483 to 503 (ALGL…LALA), and 526 to 546 (FVGM…LPML).

The protein belongs to the KdpA family. In terms of assembly, the system is composed of three essential subunits: KdpA, KdpB and KdpC.

Its subcellular location is the cell membrane. Part of the high-affinity ATP-driven potassium transport (or Kdp) system, which catalyzes the hydrolysis of ATP coupled with the electrogenic transport of potassium into the cytoplasm. This subunit binds the extracellular potassium ions and delivers the ions to the membrane domain of KdpB through an intramembrane tunnel. This is Potassium-transporting ATPase potassium-binding subunit from Mycobacterium avium (strain 104).